The following is a 213-amino-acid chain: ATP-dependent Clp protease proteolytic subunit 1 (213 aa).

Ser-108 serves as the catalytic Nucleophile. His-133 is an active-site residue.

It belongs to the peptidase S14 family. In terms of assembly, fourteen ClpP subunits assemble into 2 heptameric rings which stack back to back to give a disk-like structure with a central cavity, resembling the structure of eukaryotic proteasomes.

The protein resides in the cytoplasm. It carries out the reaction Hydrolysis of proteins to small peptides in the presence of ATP and magnesium. alpha-casein is the usual test substrate. In the absence of ATP, only oligopeptides shorter than five residues are hydrolyzed (such as succinyl-Leu-Tyr-|-NHMec, and Leu-Tyr-Leu-|-Tyr-Trp, in which cleavage of the -Tyr-|-Leu- and -Tyr-|-Trp bonds also occurs).. Cleaves peptides in various proteins in a process that requires ATP hydrolysis. Has a chymotrypsin-like activity. Plays a major role in the degradation of misfolded proteins. This Frankia casuarinae (strain DSM 45818 / CECT 9043 / HFP020203 / CcI3) protein is ATP-dependent Clp protease proteolytic subunit 1.